We begin with the raw amino-acid sequence, 629 residues long: 1-deoxy-D-xylulose-5-phosphate synthase (629 aa).

Thiamine diphosphate contacts are provided by residues H85 and 126–128 (GHS). Position 157 (D157) interacts with Mg(2+). Thiamine diphosphate is bound by residues 158-159 (GS), N186, Y293, and E373. Residue N186 coordinates Mg(2+).

The protein belongs to the transketolase family. DXPS subfamily. In terms of assembly, homodimer. It depends on Mg(2+) as a cofactor. Thiamine diphosphate serves as cofactor.

The catalysed reaction is D-glyceraldehyde 3-phosphate + pyruvate + H(+) = 1-deoxy-D-xylulose 5-phosphate + CO2. It functions in the pathway metabolic intermediate biosynthesis; 1-deoxy-D-xylulose 5-phosphate biosynthesis; 1-deoxy-D-xylulose 5-phosphate from D-glyceraldehyde 3-phosphate and pyruvate: step 1/1. Functionally, catalyzes the acyloin condensation reaction between C atoms 2 and 3 of pyruvate and glyceraldehyde 3-phosphate to yield 1-deoxy-D-xylulose-5-phosphate (DXP). The sequence is that of 1-deoxy-D-xylulose-5-phosphate synthase from Helicobacter hepaticus (strain ATCC 51449 / 3B1).